An 845-amino-acid polypeptide reads, in one-letter code: Beta-mannosidase B (845 aa).

Asparagine 252 carries an N-linked (GlcNAc...) asparagine glycan. The active-site Proton donor is glutamate 432. N-linked (GlcNAc...) asparagine glycosylation is found at asparagine 717 and asparagine 723.

The protein belongs to the glycosyl hydrolase 2 family. Beta-mannosidase B subfamily.

It carries out the reaction Hydrolysis of terminal, non-reducing beta-D-mannose residues in beta-D-mannosides.. It functions in the pathway glycan metabolism; N-glycan degradation. Its function is as follows. Exoglycosidase that cleaves the single beta-linked mannose residue from the non-reducing end of beta-mannosidic oligosaccharides of various complexity and length. Prefers mannobiose over mannotriose and has no activity against polymeric mannan. Is also severely restricted by galactosyl substitutions at the +1 subsite. This Aspergillus fumigatus (strain CBS 144.89 / FGSC A1163 / CEA10) (Neosartorya fumigata) protein is Beta-mannosidase B (mndB).